The following is a 100-amino-acid chain: Putative pterin-4-alpha-carbinolamine dehydratase (100 aa).

This sequence belongs to the pterin-4-alpha-carbinolamine dehydratase family.

The enzyme catalyses (4aS,6R)-4a-hydroxy-L-erythro-5,6,7,8-tetrahydrobiopterin = (6R)-L-erythro-6,7-dihydrobiopterin + H2O. This is Putative pterin-4-alpha-carbinolamine dehydratase from Rhodopseudomonas palustris (strain TIE-1).